A 629-amino-acid chain; its full sequence is Phosphomethylpyrimidine synthase (629 aa).

Residues Asn-215, Met-244, Tyr-273, His-309, Ser-329–Gly-331, Asp-370–Arg-373, and Glu-409 each bind substrate. His-413 contacts Zn(2+). Tyr-436 provides a ligand contact to substrate. His-477 contributes to the Zn(2+) binding site. [4Fe-4S] cluster contacts are provided by Cys-557, Cys-560, and Cys-565. The segment at Glu-589–Met-610 is disordered.

This sequence belongs to the ThiC family. Homodimer. It depends on [4Fe-4S] cluster as a cofactor.

It catalyses the reaction 5-amino-1-(5-phospho-beta-D-ribosyl)imidazole + S-adenosyl-L-methionine = 4-amino-2-methyl-5-(phosphooxymethyl)pyrimidine + CO + 5'-deoxyadenosine + formate + L-methionine + 3 H(+). It functions in the pathway cofactor biosynthesis; thiamine diphosphate biosynthesis. In terms of biological role, catalyzes the synthesis of the hydroxymethylpyrimidine phosphate (HMP-P) moiety of thiamine from aminoimidazole ribotide (AIR) in a radical S-adenosyl-L-methionine (SAM)-dependent reaction. In Erythrobacter litoralis (strain HTCC2594), this protein is Phosphomethylpyrimidine synthase.